Consider the following 310-residue polypeptide: p-hydroxybenzoic acid efflux pump subunit AaeA (310 aa).

The helical transmembrane segment at 12–32 threads the bilayer; the sequence is AITVVLVVLAFIAIFRAWSFY.

It belongs to the membrane fusion protein (MFP) (TC 8.A.1) family.

The protein localises to the cell inner membrane. In terms of biological role, forms an efflux pump with AaeB. This chain is p-hydroxybenzoic acid efflux pump subunit AaeA, found in Cronobacter sakazakii (strain ATCC BAA-894) (Enterobacter sakazakii).